The following is a 121-amino-acid chain: Outer membrane lipoprotein BBA14 (121 aa).

A signal peptide spans 1–19 (MQIKNFPFLFLLNSLIIFS). Cys20 is lipidated: N-palmitoyl cysteine. Residue Cys20 is the site of S-diacylglycerol cysteine attachment.

It is found in the cell outer membrane. Functionally, outer membrane lipoprotein that could act as a component of a potential toxin-antitoxin system in B.burgdorferi which could serve as a plasmid stabilization mechanism in a growing bacterial population. The protein is Outer membrane lipoprotein BBA14 of Borreliella burgdorferi (strain ATCC 35210 / DSM 4680 / CIP 102532 / B31) (Borrelia burgdorferi).